The chain runs to 650 residues: L-aspartate N-monooxygenase (nitrosuccinate-forming) (650 aa).

This sequence belongs to the nitrosuccinic acid synthase family. It depends on FAD as a cofactor.

It carries out the reaction L-aspartate + 3 NADPH + 3 O2 + 2 H(+) = 2-nitrobutanedioate + 3 NADP(+) + 4 H2O. Its function is as follows. Involved in the biosynthesis of desferrioxamine derivatives which have iron-binding properties and may act as siderophores. Catalyzes the iterative oxidation of L-aspartic acid to nitrosuccinic acid (2-nitrobutanedioate) via N-hydroxyaspartic acid and nitrososuccinic acid. The sequence is that of L-aspartate N-monooxygenase (nitrosuccinate-forming) from Streptomyces davaonensis (strain DSM 101723 / JCM 4913 / KCC S-0913 / 768).